A 260-amino-acid polypeptide reads, in one-letter code: Neuraminyllactose-binding hemagglutinin (260 aa).

Residues 1–27 form the signal peptide; the sequence is MKTNGHFKDFAWKKCLLGASVGALLVG. The N-palmitoyl cysteine moiety is linked to residue C28. Residue C28 is the site of S-diacylglycerol cysteine attachment. Residues 134–139 form an N-acetyl-neuraminyl-alpha(2,3)-lactose binding motif region; sequence KRTIQK.

The protein localises to the cell outer membrane. In Helicobacter pylori (Campylobacter pylori), this protein is Neuraminyllactose-binding hemagglutinin (hpaA).